Reading from the N-terminus, the 177-residue chain is Anti-apoptotic protein NR13 (177 aa).

Residues 75–94 (LEAEGGLNWGRLLALVVFTG) carry the BH1 motif. Residues 86 to 106 (LLALVVFTGTLAAALAESGCE) traverse the membrane as a helical segment. The BH2 signature appears at 126-141 (EWLEEHGGWDGFCRFF). A helical membrane pass occupies residues 156 to 176 (SNAIMAAAGFGIAGLAFLLVV).

It belongs to the Bcl-2 family. In terms of assembly, interacts with BAX. Expressed preferentially in heart, skeletal muscle, retina, optical tectum and bursa of Fabricius.

It localises to the cell membrane. Shows anti-apoptotic properties. Counteract the pro-apoptotic activity of BAX. The sequence is that of Anti-apoptotic protein NR13 (NR13) from Gallus gallus (Chicken).